Here is a 364-residue protein sequence, read N- to C-terminus: Chaperone protein DnaJ 1 (364 aa).

A J domain is found at 7–71 (DYYEILGVNR…ERRSEYDAIL (65 aa)). A CR-type zinc finger spans residues 124-200 (GCEKEIIYSR…CYGRGRVSAQ (77 aa)). Positions 137, 140, 154, 157, 174, 177, 188, and 191 each coordinate Zn(2+). 4 CXXCXGXG motif repeats span residues 137–144 (CPVCEGMG), 154–161 (CHACNGEG), 174–181 (CSVCKGKG), and 188–195 (CPTCYGRG).

It belongs to the DnaJ family. Homodimer. It depends on Zn(2+) as a cofactor.

The protein localises to the cytoplasm. Functionally, participates actively in the response to hyperosmotic and heat shock by preventing the aggregation of stress-denatured proteins and by disaggregating proteins, also in an autonomous, DnaK-independent fashion. Unfolded proteins bind initially to DnaJ; upon interaction with the DnaJ-bound protein, DnaK hydrolyzes its bound ATP, resulting in the formation of a stable complex. GrpE releases ADP from DnaK; ATP binding to DnaK triggers the release of the substrate protein, thus completing the reaction cycle. Several rounds of ATP-dependent interactions between DnaJ, DnaK and GrpE are required for fully efficient folding. Also involved, together with DnaK and GrpE, in the DNA replication of plasmids through activation of initiation proteins. The protein is Chaperone protein DnaJ 1 of Aquifex aeolicus (strain VF5).